The chain runs to 447 residues: Dihydroorotase (447 aa).

Positions 84 and 86 each coordinate Zn(2+). Residues His86–Arg88 and Asn118 contribute to the substrate site. Zn(2+)-binding residues include Asp174, His201, and His255. A substrate-binding site is contributed by Asn301. Residue Asp328 coordinates Zn(2+). Residue Asp328 is part of the active site. Residues His332 and Phe346–Gly347 contribute to the substrate site.

Belongs to the metallo-dependent hydrolases superfamily. DHOase family. Class I DHOase subfamily. The cofactor is Zn(2+).

It catalyses the reaction (S)-dihydroorotate + H2O = N-carbamoyl-L-aspartate + H(+). The protein operates within pyrimidine metabolism; UMP biosynthesis via de novo pathway; (S)-dihydroorotate from bicarbonate: step 3/3. Functionally, catalyzes the reversible cyclization of carbamoyl aspartate to dihydroorotate. The chain is Dihydroorotase from Anaplasma phagocytophilum (strain HZ).